The sequence spans 1213 residues: DNA-directed RNA polymerase subunit beta (1213 aa).

The tract at residues 1153–1213 (RDMDEDSSEH…ADESDGKVSK (61 aa)) is disordered. The segment covering 1171 to 1198 (MAEEQEKKKLAEETGKSENKEDSNETAD) has biased composition (basic and acidic residues).

This sequence belongs to the RNA polymerase beta chain family. As to quaternary structure, the RNAP catalytic core consists of 2 alpha, 1 beta, 1 beta' and 1 omega subunit. When a sigma factor is associated with the core the holoenzyme is formed, which can initiate transcription.

The enzyme catalyses RNA(n) + a ribonucleoside 5'-triphosphate = RNA(n+1) + diphosphate. DNA-dependent RNA polymerase catalyzes the transcription of DNA into RNA using the four ribonucleoside triphosphates as substrates. The protein is DNA-directed RNA polymerase subunit beta of Lactobacillus acidophilus (strain ATCC 700396 / NCK56 / N2 / NCFM).